A 251-amino-acid polypeptide reads, in one-letter code: MMKFIGIIPARYASTRFPGKPLADMNGKPMIQRVYEQVKDVLDSVCVATDDIRIENAVKAFGGQVVMTSDQHRSGTDRCYEAYQKIGEGYDVIVNIQGDEPFIHPEQIQTIKTCFADANTQIATLVKPFRSDDDFESSLFNPNSPKVVLNKNNEAMYFSRSIIPYIRGKKYTEWLPSHTFYKHIGLYAYRAQVLKEITQLPQSALELAESLEQLRWLENGYKIKVGITEQETIGIDTPEDMEKALAFLANR.

The protein belongs to the KdsB family.

Its subcellular location is the cytoplasm. The enzyme catalyses 3-deoxy-alpha-D-manno-oct-2-ulosonate + CTP = CMP-3-deoxy-beta-D-manno-octulosonate + diphosphate. Its pathway is nucleotide-sugar biosynthesis; CMP-3-deoxy-D-manno-octulosonate biosynthesis; CMP-3-deoxy-D-manno-octulosonate from 3-deoxy-D-manno-octulosonate and CTP: step 1/1. The protein operates within bacterial outer membrane biogenesis; lipopolysaccharide biosynthesis. Functionally, activates KDO (a required 8-carbon sugar) for incorporation into bacterial lipopolysaccharide in Gram-negative bacteria. This is 3-deoxy-manno-octulosonate cytidylyltransferase from Parabacteroides distasonis (strain ATCC 8503 / DSM 20701 / CIP 104284 / JCM 5825 / NCTC 11152).